An 809-amino-acid polypeptide reads, in one-letter code: G-type lectin S-receptor-like serine/threonine-protein kinase At1g61480 (809 aa).

Positions 1–24 are cleaved as a signal peptide; that stretch reads MGKKRIMFFASLLLITIFLSFSYA. Residues 25-144 form the Bulb-type lectin domain; that stretch reads GITRESPLSI…NSGRTLWESF (120 aa). Residues 25–425 lie on the Extracellular side of the membrane; the sequence is GITRESPLSI…SELGGNKRNK (401 aa). N-linked (GlcNAc...) asparagine glycosylation is found at asparagine 53, asparagine 88, asparagine 94, asparagine 103, asparagine 117, asparagine 134, and asparagine 236. The EGF-like domain occupies 278–314; it reads PENSCDIYGFCGPFGICVMSVPPKCKCFKGFVPKSIE. Intrachain disulfides connect cysteine 282/cysteine 294 and cysteine 288/cysteine 302. 2 N-linked (GlcNAc...) asparagine glycosylation sites follow: asparagine 320 and asparagine 375. Residues 333–415 form the PAN domain; that stretch reads CQGNTNGKTV…GEILSIRLAS (83 aa). 2 cysteine pairs are disulfide-bonded: cysteine 368–cysteine 389 and cysteine 372–cysteine 378. The chain crosses the membrane as a helical span at residues 426 to 446; the sequence is IIVASIVSLSLFVILAFAAFC. Residues 447–809 are Cytoplasmic-facing; that stretch reads FLRYKVKHTV…EMTQSVILGR (363 aa). A Protein kinase domain is found at 496-781; sequence FSLSNKLGQG…DLTSPKQPTF (286 aa). ATP-binding positions include 502 to 510 and lysine 524; that span reads LGQGGFGSV. Residues serine 530 and serine 545 each carry the phosphoserine modification. Residues 585–602 are caM-binding; the sequence is RKRLEIDWPKRFNIIEGI. The active-site Proton acceptor is the aspartate 621. 2 positions are modified to phosphoserine: serine 625 and serine 638. Residue threonine 655 is modified to Phosphothreonine. Serine 698 and serine 792 each carry phosphoserine.

It belongs to the protein kinase superfamily. Ser/Thr protein kinase family.

The protein resides in the cell membrane. The catalysed reaction is L-seryl-[protein] + ATP = O-phospho-L-seryl-[protein] + ADP + H(+). The enzyme catalyses L-threonyl-[protein] + ATP = O-phospho-L-threonyl-[protein] + ADP + H(+). This is G-type lectin S-receptor-like serine/threonine-protein kinase At1g61480 from Arabidopsis thaliana (Mouse-ear cress).